The primary structure comprises 325 residues: Ribosomal large subunit pseudouridine synthase D (325 aa).

One can recognise an S4 RNA-binding domain in the interval 18 to 78; sequence YRLDQALAQL…AEIEEEIRFE (61 aa). D139 is a catalytic residue.

It belongs to the pseudouridine synthase RluA family.

The protein localises to the cytoplasm. It carries out the reaction uridine(1911/1915/1917) in 23S rRNA = pseudouridine(1911/1915/1917) in 23S rRNA. Functionally, responsible for synthesis of pseudouridine from uracil at positions 1911, 1915 and 1917 in 23S ribosomal RNA. This Haemophilus ducreyi (strain 35000HP / ATCC 700724) protein is Ribosomal large subunit pseudouridine synthase D (rluD).